We begin with the raw amino-acid sequence, 209 residues long: LexA repressor (209 aa).

The H-T-H motif DNA-binding region spans 32-52 (VREIGKAVDLSSTSTVHGHLA). Residues serine 131 and lysine 169 each act as for autocatalytic cleavage activity in the active site.

The protein belongs to the peptidase S24 family. In terms of assembly, homodimer.

It catalyses the reaction Hydrolysis of Ala-|-Gly bond in repressor LexA.. Represses a number of genes involved in the response to DNA damage (SOS response), including recA and lexA. In the presence of single-stranded DNA, RecA interacts with LexA causing an autocatalytic cleavage which disrupts the DNA-binding part of LexA, leading to derepression of the SOS regulon and eventually DNA repair. The sequence is that of LexA repressor from Enterococcus faecalis (strain ATCC 700802 / V583).